A 529-amino-acid chain; its full sequence is DnaJ homolog l(2)tid, mitochondrial (529 aa).

A mitochondrion-targeting transit peptide spans 1–22 (MISCKNLCVLRQLPLKNCRRHY). At Arg35 the chain carries Omega-N-methylarginine. In terms of domain architecture, J spans 80–145 (DYYATLGVAK…QKRREYDTYG (66 aa)). Residue Lys121 is modified to N6-acetyllysine. Residues 230-308 (GVNKDVNVNV…CEGKGQTVQR (79 aa)) form a CR-type zinc finger. The Zn(2+) site is built by Cys243, Cys246, Cys260, Cys263, Cys282, Cys285, Cys296, and Cys299. The CXXCXGXG motif; approximate repeat unit spans residues 243–250 (CPKCAGSK). The stretch at 260–267 (CQYCNGTG) is one CXXCXGXG motif repeat. One copy of the CXXCXGXG motif; approximate repeat lies at 282-289 (CRYCQGTR). A CXXCXGXG motif repeat occupies 296–303 (CAECEGKG). The tract at residues 441-529 (TPGQIHGMAQ…FLNKIKSMFN (89 aa)) is disordered. The span at 497-508 (QSEKSETRRKDQ) shows a compositional bias: basic and acidic residues.

Its subcellular location is the mitochondrion outer membrane. May act as a tumor suppressor in larval imaginal disks. This chain is DnaJ homolog l(2)tid, mitochondrial (l(2)tid), found in Drosophila virilis (Fruit fly).